Here is a 92-residue protein sequence, read N- to C-terminus: PqqA binding protein (92 aa).

Belongs to the PqqD family. As to quaternary structure, monomer. Interacts with PqqE.

It participates in cofactor biosynthesis; pyrroloquinoline quinone biosynthesis. In terms of biological role, functions as a PqqA binding protein and presents PqqA to PqqE, in the pyrroloquinoline quinone (PQQ) biosynthetic pathway. This is PqqA binding protein from Xanthomonas campestris pv. campestris (strain B100).